A 74-amino-acid polypeptide reads, in one-letter code: Tetrahydromethanopterin S-methyltransferase subunit G (74 aa).

A helical membrane pass occupies residues 50 to 70 (IGILYGLVIGLYLCMLYILLG).

Belongs to the MtrG family. The complex is composed of 8 subunits; MtrA, MtrB, MtrC, MtrD, MtrE, MtrF, MtrG and MtrH.

It localises to the cell membrane. The catalysed reaction is 5-methyl-5,6,7,8-tetrahydromethanopterin + coenzyme M + 2 Na(+)(in) = 5,6,7,8-tetrahydromethanopterin + methyl-coenzyme M + 2 Na(+)(out). It participates in one-carbon metabolism; methanogenesis from CO(2); methyl-coenzyme M from 5,10-methylene-5,6,7,8-tetrahydromethanopterin: step 2/2. In terms of biological role, part of a complex that catalyzes the formation of methyl-coenzyme M and tetrahydromethanopterin from coenzyme M and methyl-tetrahydromethanopterin. This is an energy-conserving, sodium-ion translocating step. This Methanopyrus kandleri (strain AV19 / DSM 6324 / JCM 9639 / NBRC 100938) protein is Tetrahydromethanopterin S-methyltransferase subunit G.